Reading from the N-terminus, the 1037-residue chain is Protein brain tumor (1037 aa).

Disordered regions lie at residues 29–63 (SDSP…SRSE) and 159–178 (SNSS…SPPR). 2 stretches are compositionally biased toward polar residues: residues 31–42 (SPLTLSGSSPPA) and 54–63 (GGSSVKSRSE). Low complexity predominate over residues 159–175 (SNSSSNSSSSNTSANGS). The B box-type 1; atypical zinc finger occupies 174-222 (GSPPRCTACKSKCSDAVAKCFECQSYLCANCVTAHEFMHCFNGHNVCLI). Residues Cys179, Cys182, Cys204, His208, Cys328, His331, Cys351, and His356 each coordinate Zn(2+). The segment at 323-366 (QRQLFCPRHKQELLKFSCRTCCILVCKECIVLEHSTGLHELENV) adopts a B box-type 2 zinc-finger fold. The segment covering 543-554 (GPTGMSLTSNGH) has biased composition (polar residues). A disordered region spans residues 543–606 (GPTGMSLTSN…TAHHQQLQAQ (64 aa)). Positions 565–577 (QSASNSSASSAGS) are enriched in low complexity. A compositionally biased stretch (basic residues) spans 579–598 (HHGHHQQSHHHGHHNHHQTA). NHL repeat units lie at residues 767–810 (HCKF…FDKE), 814–859 (KFQF…YNQY), 860–901 (GQFV…FDQN), 902–944 (GNVL…FNYE), and 945–988 (GQYL…FTQD).

As to quaternary structure, interacts with nanos (nos) and pum. Acts via the formation of a quaternary complex composed of pum, nanos, brat and the 3'-UTR mRNA of hb. Not recruited by nanos and pum to cyclin B 3'-UTR mRNA. Might interact with mira; the interaction seems to be important for brat localization during mitosis. Interacts with Ago1. In terms of tissue distribution, expressed during embryogenesis, mainly in nervous tissues. Expressed in the embryonic central and peripheral nervous systems including the embryonic brain. In third instar larva it is expressed in the larval central nervous system including the brain and the ventral ganglion, in two glands (the ring gland and the salivary gland, and in parts of the foregut) the gastric caeca and the proventriculus.

Its subcellular location is the cytoplasm. It is found in the cell cortex. An NHL-domain family protein that functions as a translational repressor to inhibit cell proliferation. Plays a central role in translation repression of hb mRNA by being recruited by nanos (nos) and pum to the Nanos Response Element (NRE), a 16 bp sequence in the hb mRNA 3'-UTR. Probably recruited by other proteins to repress translation of other mRNAs in other tissues. Negatively regulates expression of Myc in a 3'-UTR dependent manner in both neural progenitor and epithelial cells. Regulates expression of mei-P26, possibly at transcriptional level. Involved in the regulation of ribosomal RNA synthesis and cell growth. Participates in abdominal segmentation and imaginal disk development. During neuroblast division, segregates asymmetrically and inhibits self-renewal of one of the two daughter cells. Together with the asymmetrically segregating transcription factor prospero ensures that the daughter cell will stop growing, exit the cell cycle, and differentiate into neurons possibly by modulating the function of dm in ganglion mother cells (GMC). Restricts developmental potential of type II intermediary neuronal progenitor (INP) cells playing a role in proliferation and maturation of the neuroblasts. In Drosophila melanogaster (Fruit fly), this protein is Protein brain tumor.